The sequence spans 177 residues: Large ribosomal subunit protein uL6 (177 aa).

At K44 the chain carries N6-acetyllysine.

It belongs to the universal ribosomal protein uL6 family. As to quaternary structure, part of the 50S ribosomal subunit.

In terms of biological role, this protein binds to the 23S rRNA, and is important in its secondary structure. It is located near the subunit interface in the base of the L7/L12 stalk, and near the tRNA binding site of the peptidyltransferase center. In Shigella sonnei (strain Ss046), this protein is Large ribosomal subunit protein uL6.